Here is a 321-residue protein sequence, read N- to C-terminus: Ferredoxin--NADP reductase (321 aa).

FAD-binding residues include Glu33, Gln41, Tyr46, Val86, Leu119, Asp277, and Ser318.

The protein belongs to the ferredoxin--NADP reductase type 2 family. Homodimer. It depends on FAD as a cofactor.

It carries out the reaction 2 reduced [2Fe-2S]-[ferredoxin] + NADP(+) + H(+) = 2 oxidized [2Fe-2S]-[ferredoxin] + NADPH. In Lactococcus lactis subsp. lactis (strain IL1403) (Streptococcus lactis), this protein is Ferredoxin--NADP reductase.